The chain runs to 101 residues: Pore-forming peptide amoebapore C (101 aa).

The N-terminal stretch at 1-24 is a signal peptide; that stretch reads MKLFVLLCVFVLCLASQEKQQDRE. The region spanning 25–101 is the Saposin B-type domain; the sequence is IPVLCPVCTS…KLICGLIHAC (77 aa). 3 disulfides stabilise this stretch: Cys-29–Cys-101, Cys-32–Cys-95, and Cys-59–Cys-70.

Monomer. Homodimer. Hexamer; formed during insertion in the membrane.

It localises to the cytoplasmic granule. Functionally, forms pores in the cell membrane of host cells. Has antibacterial activity against M.luteus, no activity against E.coli. Implicated in the cytolytic activity of the parasite. The polypeptide is Pore-forming peptide amoebapore C (Entamoeba histolytica (strain ATCC 30459 / HM-1:IMSS / ABRM)).